A 341-amino-acid chain; its full sequence is L-threonine 3-dehydrogenase (341 aa).

Cys38 provides a ligand contact to Zn(2+). Active-site charge relay system residues include Thr40 and His43. 6 residues coordinate Zn(2+): His63, Glu64, Cys93, Cys96, Cys99, and Cys107. NAD(+)-binding positions include Ile175, Asp195, Arg200, 262-264 (LGI), and 286-287 (IY).

This sequence belongs to the zinc-containing alcohol dehydrogenase family. As to quaternary structure, homotetramer. It depends on Zn(2+) as a cofactor.

The protein resides in the cytoplasm. It catalyses the reaction L-threonine + NAD(+) = (2S)-2-amino-3-oxobutanoate + NADH + H(+). Its pathway is amino-acid degradation; L-threonine degradation via oxydo-reductase pathway; glycine from L-threonine: step 1/2. Its function is as follows. Catalyzes the NAD(+)-dependent oxidation of L-threonine to 2-amino-3-ketobutyrate. In Marinomonas sp. (strain MWYL1), this protein is L-threonine 3-dehydrogenase.